The primary structure comprises 707 residues: E3 ubiquitin-protein ligase Praja-2 (707 aa).

The segment covering 1–10 (MSQYTEKEPS) has biased composition (basic and acidic residues). Disordered regions lie at residues 1-32 (MSQY…QTIT), 72-120 (PKEN…PSIA), and 250-314 (QNGQ…VRPK). S2 carries the N-acetylserine modification. Composition is skewed to polar residues over residues 74–83 (ENTSGSSSLD) and 109–119 (LNQSTESSPSI). The span at 257-276 (RSSEDGVVRKRRQDDTDQGR) shows a compositional bias: basic and acidic residues. Residues 293-308 (EQNTSDRANHHGSSPE) show a composition bias toward polar residues. S306 and S320 each carry phosphoserine. Residue S339 is modified to Phosphoserine; by PKA. Disordered stretches follow at residues 379-405 (RVTQ…QESR) and 424-493 (EDSS…QTSL). Positions 381-390 (TQRETERNRV) are enriched in basic and acidic residues. Position 385 is a phosphothreonine; by PKA (T385). Polar residues predominate over residues 391 to 401 (TSENGATASGR). Residue S430 is modified to Phosphoserine. Residues 465 to 481 (NDPELQSDSSGPEEENQ) show a composition bias toward acidic residues. Positions 482–491 (ELSLQEGEQT) are enriched in polar residues. An interaction with PRKAR1A, PRKAR2A and PRKAR2B region spans residues 530–707 (DGNNNLEDDS…PANDNAEEAP (178 aa)). The tract at residues 549–569 (WSLFDGFADGLGVAEAISYVD) is mediates interaction with TBC1D31. An RING-type; atypical zinc finger spans residues 633–674 (CPICCSEYIKDDIATELPCHHFFHKPCVSIWLQKSGTCPVCR). The span at 685 to 701 (SAAASSDPDPDASPAND) shows a compositional bias: low complexity. The interval 685–707 (SAAASSDPDPDASPANDNAEEAP) is disordered.

As to quaternary structure, binds ubiquitin-conjugating enzymes (E2s). In vitro, interacts with the ubiquitin-conjugating enzyme, UBE2D2. The phosphorylated form interacts with PRKAR1A, PRKAR2A and PRKAR2B. Binds the catalytic subunits of cAMP-dependent protein kinase. Interacts with MFHAS1. Interacts with TBC1D31; the interaction is direct and recruits PJA2 to centrosomes.

Its subcellular location is the cytoplasm. The protein localises to the cell membrane. It localises to the endoplasmic reticulum membrane. It is found in the golgi apparatus membrane. The protein resides in the synapse. Its subcellular location is the postsynaptic density. The protein localises to the cytoskeleton. It localises to the microtubule organizing center. It is found in the centrosome. The enzyme catalyses S-ubiquitinyl-[E2 ubiquitin-conjugating enzyme]-L-cysteine + [acceptor protein]-L-lysine = [E2 ubiquitin-conjugating enzyme]-L-cysteine + N(6)-ubiquitinyl-[acceptor protein]-L-lysine.. Its pathway is protein modification; protein ubiquitination. Has E2-dependent E3 ubiquitin-protein ligase activity. Responsible for ubiquitination of cAMP-dependent protein kinase type I and type II-alpha/beta regulatory subunits and for targeting them for proteasomal degradation. Essential for PKA-mediated long-term memory processes. Through the ubiquitination of MFHAS1, positively regulates the TLR2 signaling pathway that leads to the activation of the downstream p38 and JNK MAP kinases and promotes the polarization of macrophages toward the pro-inflammatory M1 phenotype. Plays a role in ciliogenesis by ubiquitinating OFD1. This chain is E3 ubiquitin-protein ligase Praja-2 (Pja2), found in Mus musculus (Mouse).